The sequence spans 420 residues: MGSSEPIPIAESDKRKKKKRKARATDSLPGKFEDVYKLTSELLGEGANAKVQVAVSLQNGNEYAVKIIEKHAGHSRSRVFREVETLYQCQGNKHILELIEFFEDDTRFYLVFEKLQGGSILAHIQKQKHFNEREASRVVRDVAAALDFRHTKGIAHRDLKPENILCESPEKVSPVKICDFDLGSGVKLNNSCTPITTPELTTPCGSAEYMAPEVVEVFTDEATFYDKRCDLWSLGVVLYIMLSGYPPFVGHCGADCGWDRGEVCTVCQNKLFESIQKGKYEFPDKDWAHISNEAKDLISKLLVRDAKQRLSAAQVLQHPWVQGQAPERGLPTPQVLQRNSSTMDLTLFAAEAIALNRQLSQHEENEQNKLAEESEVLAEGLCSVKLSPPSKSRLARRRALAQAGRSGDAPPSPTPTTPAP.

Residues 1–25 (MGSSEPIPIAESDKRKKKKRKARAT) are disordered. S27 carries the phosphoserine; by PAK2 modification. The region spanning 37–321 (KLTSELLGEG…AAQVLQHPWV (285 aa)) is the Protein kinase domain. ATP contacts are provided by residues 43-51 (LGEGANAKV) and K66. Residue D158 is the Proton acceptor of the active site. S168 and S173 each carry phosphoserine. 3 positions are modified to phosphothreonine: T197, T202, and T332. Residues 386-420 (LSPPSKSRLARRRALAQAGRSGDAPPSPTPTTPAP) are disordered. Over residues 400–409 (LAQAGRSGDA) the composition is skewed to low complexity. Residues 410–420 (PPSPTPTTPAP) show a composition bias toward pro residues.

The protein belongs to the protein kinase superfamily. CAMK Ser/Thr protein kinase family. As to quaternary structure, interacts with the C-terminal regions of EIF4G1 and EIF4G2. Also binds to dephosphorylated ERK1 and ERK2, and to the p38 kinases. Requires Mg(2+) as cofactor. Dual phosphorylation of Thr-197 and Thr-202 activates the kinase. Phosphorylation of Thr-332 activates the kinase. MAPK3/ERK1 is one of the kinases which activate MKNK1/MNK1. Phosphorylation by PAK2 leads to a reduced phosphorylation of EIF4G1.

It carries out the reaction L-seryl-[protein] + ATP = O-phospho-L-seryl-[protein] + ADP + H(+). It catalyses the reaction L-threonyl-[protein] + ATP = O-phospho-L-threonyl-[protein] + ADP + H(+). With respect to regulation, phosphorylated and activated by the p38 kinases and kinases in the Erk pathway. In terms of biological role, may play a role in the response to environmental stress and cytokines. Appears to regulate translation by phosphorylating EIF4E, thus increasing the affinity of this protein for the 7-methylguanosine-containing mRNA cap. In Bos taurus (Bovine), this protein is MAP kinase-interacting serine/threonine-protein kinase 1 (MKNK1).